An 803-amino-acid polypeptide reads, in one-letter code: MGAPGITGRTRPTKVKKQASQQKRKRDDVDVEKLEQAVTELDPKTGTYNDFSDLPLSDPTKQGLKACHFAVMTDIQRKAVPLALKGHDILGAAKTGSGKTLSFIIPVLENLYRLQHVGADAGLGALILSPTRELAIQIFDVLCKIGKHGHMFAAGLLIGGKSLESERQALPRMNILVATPGRMLQHLSQTAAFLVDDLKMLVLDEADRILDMGFQRDVDAIIDYLPKERQTLLFSATQSKKVSDLARLSLQDPEYVSVHAEDKSATPKSLQQNYIICPLEEKLDTLWSFIQASKKSKILVFFSSAKAVRFVYESFRHMQPGIPLLHIHGRQKQGARLDTTAKFSSAKNSCLFATDVAARGLDFPAVDFVIQVDCPDDVDTYIHRVGRTARYNREGRGVLFLAPSEEEGMLKRLEAKKVPVEAINVRQKKRQSIKEQLQNMCFQDPALKYLGQKAFMTYVKSVYLQKDKEVFQLKEYDLEAFAASLGLPGTPRIKFLKDDNSKQKKQASRQTIEVSDSDEEEAPKAEKPVRTKYDRMFERKNQDVLAEHYKKLVRDGDEEISAPANDFSGEATTNGADDDFLAIKRRIPADDEDEDFGGEASVAPGGRVVHLAGASQPLIIDSNRREKLLQSKKKLTKLMDRGKKLVYDDDGNPHEVYELETEADFKAKGLPEHQRQKFIEAAREVVQTADVEDKATARAKRKEKLRKRKERERGEAEDDGDEAVELEDTGENPLANFLADAQYTDDEQEEVEQPKKKEKKWFQSDSEDEEKSSKKKRKKAKQQVVEEPETLEDMEALAAGLLG.

The tract at residues 1 to 32 (MGAPGITGRTRPTKVKKQASQQKRKRDDVDVE) is disordered. The short motif at 49-77 (NDFSDLPLSDPTKQGLKACHFAVMTDIQR) is the Q motif element. The 177-residue stretch at 80–256 (VPLALKGHDI…RLSLQDPEYV (177 aa)) folds into the Helicase ATP-binding domain. Residue 93 to 100 (AKTGSGKT) coordinates ATP. The DEAD box motif lies at 204 to 207 (DEAD). Residues 269–441 (SLQQNYIICP…SIKEQLQNMC (173 aa)) enclose the Helicase C-terminal domain. 2 disordered regions span residues 494–531 (KFLK…PVRT) and 686–803 (VQTA…GLLG). The segment covering 522-531 (APKAEKPVRT) has biased composition (basic and acidic residues). Basic residues predominate over residues 697–710 (ARAKRKEKLRKRKE). Acidic residues-rich tracts occupy residues 715–730 (EAED…EDTG) and 786–795 (EEPETLEDME).

It belongs to the DEAD box helicase family. DDX10/DBP4 subfamily. As to quaternary structure, interacts with the U3 and U14 snoRNAs. Associates with pre-ribosomal complexes.

The protein resides in the nucleus. It is found in the nucleolus. The enzyme catalyses ATP + H2O = ADP + phosphate + H(+). ATP-dependent RNA helicase required for ribosome biogenesis. Involved in the release of U14 snoRNA in pre-ribosomal complexes. Required for pre-rRNA cleavage at site A2. The sequence is that of ATP-dependent RNA helicase DBP4 (DBP4) from Phaeosphaeria nodorum (strain SN15 / ATCC MYA-4574 / FGSC 10173) (Glume blotch fungus).